The following is a 477-amino-acid chain: Histidine--tRNA ligase (477 aa).

It belongs to the class-II aminoacyl-tRNA synthetase family. Homodimer.

The protein localises to the cytoplasm. The enzyme catalyses tRNA(His) + L-histidine + ATP = L-histidyl-tRNA(His) + AMP + diphosphate + H(+). The sequence is that of Histidine--tRNA ligase from Xanthomonas campestris pv. campestris (strain 8004).